Consider the following 387-residue polypeptide: Putative F-box protein At1g47800 (387 aa).

An F-box domain is found at L8–F54.

The sequence is that of Putative F-box protein At1g47800 from Arabidopsis thaliana (Mouse-ear cress).